The following is a 314-amino-acid chain: Quinolinate synthase (314 aa).

Positions 27 and 44 each coordinate iminosuccinate. Residue Cys-89 participates in [4Fe-4S] cluster binding. Residues 115–117 (YIN) and Ser-132 contribute to the iminosuccinate site. Position 175 (Cys-175) interacts with [4Fe-4S] cluster. Iminosuccinate-binding positions include 201-203 (HPE) and Thr-218. Cys-271 serves as a coordination point for [4Fe-4S] cluster.

It belongs to the quinolinate synthase family. Type 2 subfamily. The cofactor is [4Fe-4S] cluster.

It is found in the cytoplasm. The catalysed reaction is iminosuccinate + dihydroxyacetone phosphate = quinolinate + phosphate + 2 H2O + H(+). It participates in cofactor biosynthesis; NAD(+) biosynthesis; quinolinate from iminoaspartate: step 1/1. Catalyzes the condensation of iminoaspartate with dihydroxyacetone phosphate to form quinolinate. This is Quinolinate synthase from Ehrlichia chaffeensis (strain ATCC CRL-10679 / Arkansas).